The sequence spans 471 residues: Plant intracellular Ras-group-related LRR protein 2 (471 aa).

A coiled-coil region spans residues 106-133 (VVRLDEVHDSYEKKLKDTEEELSRVYST). LRR repeat units follow at residues 159–182 (GGTVERIDLSSQELKLIPEAFWKV), 183–205 (VGLVYLNLSGNDLTFIPDAISKL), 206–229 (KKLEELDVSSNSLESLPDSIGMLL), 231–251 (LRILNVNANNLTALPESIAHC), 253–275 (SLVELDASYNNLTSLPTNIGYGL), 276–298 (QNLERLSIQLNKLRYFPGSISEM), 300–321 (NLKYLDAHMNEIHGIPNSIGRL), 324–346 (LEVLNLSSNFNNLMGVPDTITDL), 347–369 (TNLRELDLSNNQIQAIPDSFYRL), and 371–392 (KLEKLNLDQNPLEIPSQEVATQ). The GVYW; degenerate signature appears at 393–405 (GAEVVREFMRKRW).

It belongs to the SHOC2 family. Widely expressed but preferentially in roots.

Functionally, leucine-rich repeat protein that likely mediates protein interactions, possibly in the context of signal transduction. The protein is Plant intracellular Ras-group-related LRR protein 2 (PIRL2) of Arabidopsis thaliana (Mouse-ear cress).